The chain runs to 185 residues: Ribosome-recycling factor (185 aa).

The protein belongs to the RRF family.

It is found in the cytoplasm. Its function is as follows. Responsible for the release of ribosomes from messenger RNA at the termination of protein biosynthesis. May increase the efficiency of translation by recycling ribosomes from one round of translation to another. This is Ribosome-recycling factor from Campylobacter concisus (strain 13826).